Here is a 520-residue protein sequence, read N- to C-terminus: Putative cytochrome P450 CYP13A5 (520 aa).

Residue Cys-464 participates in heme binding.

This sequence belongs to the cytochrome P450 family. It depends on heme as a cofactor.

Functionally, cytochromes P450 are a group of heme-thiolate monooxygenases. They oxidize a variety of structurally unrelated compounds, including steroids, fatty acids, and xenobiotics. This is Putative cytochrome P450 CYP13A5 (cyp-13A5) from Caenorhabditis elegans.